A 345-amino-acid polypeptide reads, in one-letter code: S-adenosylmethionine:tRNA ribosyltransferase-isomerase (345 aa).

It belongs to the QueA family. Monomer.

Its subcellular location is the cytoplasm. It carries out the reaction 7-aminomethyl-7-carbaguanosine(34) in tRNA + S-adenosyl-L-methionine = epoxyqueuosine(34) in tRNA + adenine + L-methionine + 2 H(+). It participates in tRNA modification; tRNA-queuosine biosynthesis. Transfers and isomerizes the ribose moiety from AdoMet to the 7-aminomethyl group of 7-deazaguanine (preQ1-tRNA) to give epoxyqueuosine (oQ-tRNA). This chain is S-adenosylmethionine:tRNA ribosyltransferase-isomerase, found in Anaeromyxobacter sp. (strain K).